The sequence spans 381 residues: Succinyl-diaminopimelate desuccinylase (381 aa).

Histidine 72 contributes to the Zn(2+) binding site. The active site involves aspartate 74. Aspartate 105 is a Zn(2+) binding site. Residue glutamate 139 is the Proton acceptor of the active site. The Zn(2+) site is built by glutamate 140, glutamate 168, and histidine 354.

It belongs to the peptidase M20A family. DapE subfamily. Homodimer. Zn(2+) is required as a cofactor. Requires Co(2+) as cofactor.

The catalysed reaction is N-succinyl-(2S,6S)-2,6-diaminopimelate + H2O = (2S,6S)-2,6-diaminopimelate + succinate. Its pathway is amino-acid biosynthesis; L-lysine biosynthesis via DAP pathway; LL-2,6-diaminopimelate from (S)-tetrahydrodipicolinate (succinylase route): step 3/3. In terms of biological role, catalyzes the hydrolysis of N-succinyl-L,L-diaminopimelic acid (SDAP), forming succinate and LL-2,6-diaminopimelate (DAP), an intermediate involved in the bacterial biosynthesis of lysine and meso-diaminopimelic acid, an essential component of bacterial cell walls. This is Succinyl-diaminopimelate desuccinylase from Shewanella sp. (strain MR-4).